Reading from the N-terminus, the 170-residue chain is Translationally-controlled tumor protein homolog (170 aa).

In terms of domain architecture, TCTP spans 1 to 170; that stretch reads MIIYKDLLSG…FKDGLEIEKC (170 aa).

This sequence belongs to the TCTP family.

Its subcellular location is the cytoplasm. Its function is as follows. Involved in calcium binding and microtubule stabilization. The polypeptide is Translationally-controlled tumor protein homolog (tpt1) (Scophthalmus maximus (Turbot)).